Consider the following 194-residue polypeptide: Molybdenum cofactor guanylyltransferase (194 aa).

Residues 12–14 (LAG), lysine 25, asparagine 53, aspartate 70, and aspartate 100 contribute to the GTP site. Mg(2+) is bound at residue aspartate 100.

The protein belongs to the MobA family. In terms of assembly, monomer. Mg(2+) is required as a cofactor.

It is found in the cytoplasm. It carries out the reaction Mo-molybdopterin + GTP + H(+) = Mo-molybdopterin guanine dinucleotide + diphosphate. Its function is as follows. Transfers a GMP moiety from GTP to Mo-molybdopterin (Mo-MPT) cofactor (Moco or molybdenum cofactor) to form Mo-molybdopterin guanine dinucleotide (Mo-MGD) cofactor. The chain is Molybdenum cofactor guanylyltransferase from Photobacterium profundum (strain SS9).